We begin with the raw amino-acid sequence, 337 residues long: Aspartate carbamoyltransferase catalytic subunit (337 aa).

Carbamoyl phosphate contacts are provided by Arg-57 and Thr-58. Lys-86 is a binding site for L-aspartate. Positions 107, 135, and 138 each coordinate carbamoyl phosphate. The L-aspartate site is built by Arg-172 and Arg-234. Carbamoyl phosphate is bound by residues Leu-274 and Pro-275.

It belongs to the aspartate/ornithine carbamoyltransferase superfamily. ATCase family. As to quaternary structure, heterododecamer (2C3:3R2) of six catalytic PyrB chains organized as two trimers (C3), and six regulatory PyrI chains organized as three dimers (R2).

The enzyme catalyses carbamoyl phosphate + L-aspartate = N-carbamoyl-L-aspartate + phosphate + H(+). The protein operates within pyrimidine metabolism; UMP biosynthesis via de novo pathway; (S)-dihydroorotate from bicarbonate: step 2/3. Catalyzes the condensation of carbamoyl phosphate and aspartate to form carbamoyl aspartate and inorganic phosphate, the committed step in the de novo pyrimidine nucleotide biosynthesis pathway. This is Aspartate carbamoyltransferase catalytic subunit from Saccharophagus degradans (strain 2-40 / ATCC 43961 / DSM 17024).